The chain runs to 1714 residues: MSSIDISGRYALNDLEMVSKYQTAYACEGKKLTIECDPGDVINLIRANYGRFSITICNDHGNVEWSVNCMFPKSLTVLNSRCAHKQSCSVLAATSMFGDPCPGTHKYLEAHYQCISAAQTSTTTNRPSPPPWVLNNGPPIFGNGSGLIHPPGSPGAAPPPPRLPTLPGVVGISGNGGLFNVPPPHTVTHSTPSSSTVPGRMKGVATSTTTTKNPAGRHDGLPPPPQLHHHHTHHGEEAAPPTKPSSKLPSAGNATAPSNTRILTGVGGSGTDDGTLLTTKSSPNRPPVTASNGSPASGNNSVVRTINNINMNAAGMSGADDESKLFCGPTHARNLFWNMTRVGDVNVQPCPGGAAGIAKWRCVLMKRLPDSGYDEYDDDPSSTTPAPSGGDCLHNSSSCDPPVSMAHKVNQRLRNFEPTWHPMTPDLTQCRSLWLNNLELRVNQRDSSLISIANDMSEVTSSKTLYGGDMLVTTKIIQTVSEKMLHDKETFPDQRQREAMIMELLHCVVKTGSNLLDESQLSSWLDLNPEDQMRVATSLLTGLEYNAFLLADTIIRERSVVQKVKNILLSVRVLETKTIPPSVIFPDSDQWPLSSDRIELPRAALLDNSEGGLVRIVFAAFDRLESILKPSYDHFDLKSSRSYVRNTAILANDSSDSNTGEIQQRIRILNSKVISASLGKGRHIQLSQPITLTLKHLKTENVTNPTCVFWNYIDHAWSANGCSLESTNRTHSVCSCNHLTNFAILMDVVDEHQHSLFTMFDGNMRVFIYISIAICVVFIVIALLTLKLFNGVFVKSARTTIYTSIYVCLLAIELLFLLGIEQTETSIFCGFITVFLHCAILSGAAWFCYEAFHSYYTLTSDELLVEVDQTPKVNWYYLLSYGLSVSVVAISVAINPSTYTQNDYCVLMEANILFYATFVAPVLIFFVAAIGYTFLSWIIMCRKSCTGLKTKEHTRLASVRFDIRCSFVFLLLLSAVWCSAYFYLRGAKTDEDTTTIYGYCFICFNTLLGLYIFVFHCIQNEKIRREYRKYVRQHAWLPKCLRCSKTSISSGIVAGGGPAAGTLCSVNTSKKPKLPLGVSEEVHGEQQQHQQAMGVPAPEDAIMGATSDCELNEAQQRRTLKSGLMTGTLQTPQQPLAGHVVLERGSTLRSTGHASPTSSAGSTHLIFAHKQQQQQQALGESYYHQPDYYSWKQPPQGGLKSQREYYNNAGVAASSPQQAHEVFYWTQKPNSQHGKKKRGGAVPASPSGSLHSRTAAASQVLFYPSYKKTKQGQPSGYPHYAEALDPPHSAGAAFYQQQQQMRRQQQQQQQQQQQQLSSDEEQAEQHAHLLHLQHQQQHQRRVGGQQQLPAPPPHMAHFQQEFMQRQFRNKTSNCDLAMGGDTYHNQGSEGGADVCPVYEEILSNRNSDVQHYEVGDFDVDEVYNNSVGTGVFNSMRAAITAGGSRYGGGSLSGGSVSSRSQQQQLQKQQKQQQQQQQRSARRCTADDDDDDDEEEDDEATAAEQLHDSVCDDDDEEEDSDLDDDAHKLPPQSDERMRRLMAMQDEDFKRRFQRQQRKNGASIDYGALPPGVAPGAGSAGPHPDHNRAVFGVSGGVGEGSMRGAYRQQQQQQQQQLNAKSPSARLAVNELFGHGNAGPPLPPANQTPAQKRQQLQKLSPQSTTSSSSHTSHSNLQPHPHPLTHQHPHPPQHQQRHLSAMLDENNTVRCYLEPLAK.

The Extracellular segment spans residues 1–765 (MSSIDISGRY…LFTMFDGNMR (765 aa)). Residues 26 to 115 (ACEGKKLTIE…KYLEAHYQCI (90 aa)) form the SUEL-type lectin domain. N-linked (GlcNAc...) asparagine glycosylation is present at asparagine 143. Positions 183-302 (PPHTVTHSTP…GSPASGNNSV (120 aa)) are disordered. Over residues 186 to 198 (TVTHSTPSSSTVP) the composition is skewed to low complexity. The segment covering 244–262 (PSSKLPSAGNATAPSNTRI) has biased composition (polar residues). A glycan (N-linked (GlcNAc...) asparagine) is linked at asparagine 253. 2 stretches are compositionally biased toward low complexity: residues 272-282 (DDGTLLTTKSS) and 290-301 (ASNGSPASGNNS). N-linked (GlcNAc...) asparagine glycosylation is found at asparagine 299, asparagine 338, asparagine 395, asparagine 652, asparagine 701, and asparagine 728. The interval 373–397 (YDEYDDDPSSTTPAPSGGDCLHNSS) is disordered. The GAIN-B domain occupies 558–752 (RSVVQKVKNI…AILMDVVDEH (195 aa)). Intrachain disulfides connect cysteine 707–cysteine 734 and cysteine 722–cysteine 736. The segment at 707-752 (CVFWNYIDHAWSANGCSLESTNRTHSVCSCNHLTNFAILMDVVDEH) is GPS. Residues 766–786 (VFIYISIAICVVFIVIALLTL) traverse the membrane as a helical segment. The Cytoplasmic segment spans residues 787-799 (KLFNGVFVKSART). Residues 800–820 (TIYTSIYVCLLAIELLFLLGI) form a helical membrane-spanning segment. The Extracellular portion of the chain corresponds to 821-826 (EQTETS). The chain crosses the membrane as a helical span at residues 827–847 (IFCGFITVFLHCAILSGAAWF). Residues 848-873 (CYEAFHSYYTLTSDELLVEVDQTPKV) are Cytoplasmic-facing. The chain crosses the membrane as a helical span at residues 874-894 (NWYYLLSYGLSVSVVAISVAI). At 895-911 (NPSTYTQNDYCVLMEAN) the chain is on the extracellular side. The chain crosses the membrane as a helical span at residues 912 to 932 (ILFYATFVAPVLIFFVAAIGY). Residues 933–966 (TFLSWIIMCRKSCTGLKTKEHTRLASVRFDIRCS) are Cytoplasmic-facing. The helical transmembrane segment at 967–987 (FVFLLLLSAVWCSAYFYLRGA) threads the bilayer. The Extracellular portion of the chain corresponds to 988–994 (KTDEDTT). The chain crosses the membrane as a helical span at residues 995-1015 (TIYGYCFICFNTLLGLYIFVF). Over 1016-1714 (HCIQNEKIRR…VRCYLEPLAK (699 aa)) the chain is Cytoplasmic. Residues serine 1155, serine 1245, and serine 1252 each carry the phosphoserine modification. 5 disordered regions span residues 1229-1253 (PNSQ…LHSR), 1268-1287 (KTKQ…LDPP), 1293-1354 (AFYQ…PPPH), 1447-1536 (GGGS…DERM), and 1551-1694 (FQRQ…QQRH). Low complexity predominate over residues 1296–1315 (QQQQQMRRQQQQQQQQQQQQ). 2 positions are modified to phosphoserine: serine 1317 and serine 1318. 2 stretches are compositionally biased toward low complexity: residues 1330–1348 (LHLQ…QQQL) and 1453–1478 (GGSV…QQQR). Acidic residues-rich tracts occupy residues 1486-1500 (DDDD…DEAT) and 1510-1523 (CDDD…DLDD). The span at 1524–1536 (DAHKLPPQSDERM) shows a compositional bias: basic and acidic residues. Residues 1565 to 1580 (GALPPGVAPGAGSAGP) are compositionally biased toward low complexity. Positions 1644-1659 (QTPAQKRQQLQKLSPQ) are enriched in polar residues. Residues 1660–1675 (STTSSSSHTSHSNLQP) are compositionally biased toward low complexity. The span at 1679 to 1693 (PLTHQHPHPPQHQQR) shows a compositional bias: basic residues.

Belongs to the G-protein coupled receptor 2 family. LN-TM7 subfamily. Forms a heterodimer, consisting of a large extracellular region non-covalently linked to a seven-transmembrane moiety. In terms of processing, proteolytically cleaved into 2 subunits, an extracellular subunit and a seven-transmembrane subunit.

It localises to the cell membrane. The chain is Latrophilin Cirl from Drosophila ananassae (Fruit fly).